The following is a 283-amino-acid chain: Elongation factor Ts (283 aa).

The tract at residues 80–83 (TDFV) is involved in Mg(2+) ion dislocation from EF-Tu.

The protein belongs to the EF-Ts family.

Its subcellular location is the cytoplasm. Its function is as follows. Associates with the EF-Tu.GDP complex and induces the exchange of GDP to GTP. It remains bound to the aminoacyl-tRNA.EF-Tu.GTP complex up to the GTP hydrolysis stage on the ribosome. The protein is Elongation factor Ts of Salmonella agona (strain SL483).